Reading from the N-terminus, the 131-residue chain is Small ribosomal subunit protein uS11 (131 aa).

Belongs to the universal ribosomal protein uS11 family. Part of the 30S ribosomal subunit. Interacts with proteins S7 and S18. Binds to IF-3.

Functionally, located on the platform of the 30S subunit, it bridges several disparate RNA helices of the 16S rRNA. Forms part of the Shine-Dalgarno cleft in the 70S ribosome. This is Small ribosomal subunit protein uS11 from Geobacter sulfurreducens (strain ATCC 51573 / DSM 12127 / PCA).